A 253-amino-acid chain; its full sequence is Sugar fermentation stimulation protein homolog (253 aa).

It belongs to the SfsA family.

This chain is Sugar fermentation stimulation protein homolog, found in Chromohalobacter salexigens (strain ATCC BAA-138 / DSM 3043 / CIP 106854 / NCIMB 13768 / 1H11).